A 306-amino-acid chain; its full sequence is N(1)-aminopropylagmatine ureohydrolase (306 aa).

Mn(2+) contacts are provided by His-121, Asp-145, His-147, Asp-149, Asp-228, and Asp-230.

Belongs to the arginase family. The cofactor is Mn(2+).

The enzyme catalyses N(1)-(3-aminopropyl)agmatine + H2O = urea + spermidine. It functions in the pathway amine and polyamine biosynthesis; spermidine biosynthesis. Its function is as follows. Ureohydrolase involved in the biosynthesis of spermidine via the carboxyaminopropylagmatine (CAPA) pathway. Catalyzes the conversion of aminopropylagmatine (APA) to spermidine and urea. Is highly specific to APA and incapable of releasing measurable urea from CAPA, agmatine, arginine, guanidine, guanidinobutyrate and guanidinopropionate. In Synechocystis sp. (strain ATCC 27184 / PCC 6803 / Kazusa), this protein is N(1)-aminopropylagmatine ureohydrolase.